A 28-amino-acid polypeptide reads, in one-letter code: Kalata-B12 (28 aa).

The segment at residues 1–28 (GSLCGDTCFVLGCNDSSCSCNYPICVKD) is a cross-link (cyclopeptide (Gly-Asp)). 3 disulfides stabilise this stretch: cysteine 4–cysteine 18, cysteine 8–cysteine 20, and cysteine 13–cysteine 25.

This is a cyclic peptide.

Its function is as follows. Probably participates in a plant defense mechanism. This Oldenlandia affinis protein is Kalata-B12.